The following is an 844-amino-acid chain: Penicillin-binding protein 1B (844 aa).

Positions 1–10 are enriched in basic and acidic residues; that stretch reads MAGNDREPIG. The interval 1 to 60 is disordered; that stretch reads MAGNDREPIGRKGKPTRPVKQKVSRRRYEDDDDYDDYDDYEDEEPMPRKGKGKGKGRKPR. The Cytoplasmic portion of the chain corresponds to 1–63; the sequence is MAGNDREPIG…GKGRKPRGKR (63 aa). The segment covering 11–25 has biased composition (basic residues); sequence RKGKPTRPVKQKVSR. Positions 30-44 are enriched in acidic residues; that stretch reads DDDDYDDYDDYEDEE. Positions 48–60 are enriched in basic residues; that stretch reads RKGKGKGKGRKPR. Residues 64–87 form a helical; Signal-anchor for type II membrane protein membrane-spanning segment; it reads GWLWLLLKLAIVFAVLIAIYGVYL. Residues 88-250 are membrane association; it reads DQKIRSRIDG…DGISLYSIGR (163 aa). The Periplasmic portion of the chain corresponds to 88–844; it reads DQKIRSRIDG…GWIKDMFGSN (757 aa). Residues 109–200 are uvrB domain 2 homolog; it reads RMVNLEPDMT…QFGFFRLDPR (92 aa). The transglycosylase stretch occupies residues 195–367; it reads FRLDPRLITM…SIYNPWRNPK (173 aa). Residue Glu233 is the Proton donor; for transglycosylase activity of the active site. Positions 444–736 are transpeptidase; sequence SVAQDAAEKA…NNQPTKLYGA (293 aa). Residue Ser510 is the Acyl-ester intermediate; for transpeptidase activity of the active site. Residues 793–825 show a composition bias toward low complexity; it reads LCQQSEMQQQPSGNPFDQSSQPQQQPQQQPAQQ. The tract at residues 793–835 is disordered; the sequence is LCQQSEMQQQPSGNPFDQSSQPQQQPQQQPAQQEQKDSDGVAG.

The protein in the N-terminal section; belongs to the glycosyltransferase 51 family. This sequence in the C-terminal section; belongs to the transpeptidase family. Forms a trimeric complex with MipA and MltA. Has also been shown to exist as monomer or homodimer; homodimer of Alpha and Gamma isozymes can be found. Interacts with UvrA, FtsL and FtsN.

It is found in the cell inner membrane. It carries out the reaction [GlcNAc-(1-&gt;4)-Mur2Ac(oyl-L-Ala-gamma-D-Glu-L-Lys-D-Ala-D-Ala)](n)-di-trans,octa-cis-undecaprenyl diphosphate + beta-D-GlcNAc-(1-&gt;4)-Mur2Ac(oyl-L-Ala-gamma-D-Glu-L-Lys-D-Ala-D-Ala)-di-trans,octa-cis-undecaprenyl diphosphate = [GlcNAc-(1-&gt;4)-Mur2Ac(oyl-L-Ala-gamma-D-Glu-L-Lys-D-Ala-D-Ala)](n+1)-di-trans,octa-cis-undecaprenyl diphosphate + di-trans,octa-cis-undecaprenyl diphosphate + H(+). It catalyses the reaction Preferential cleavage: (Ac)2-L-Lys-D-Ala-|-D-Ala. Also transpeptidation of peptidyl-alanyl moieties that are N-acyl substituents of D-alanine.. Its pathway is cell wall biogenesis; peptidoglycan biosynthesis. In terms of biological role, cell wall formation. Synthesis of cross-linked peptidoglycan from the lipid intermediates. The enzyme has a penicillin-insensitive transglycosylase N-terminal domain (formation of linear glycan strands) and a penicillin-sensitive transpeptidase C-terminal domain (cross-linking of the peptide subunits). This is Penicillin-binding protein 1B (mrcB) from Escherichia coli (strain K12).